Here is a 261-residue protein sequence, read N- to C-terminus: Carnitinyl-CoA dehydratase (261 aa).

Glu-111 (nucleophile) is an active-site residue. Glu-131 functions as the Proton acceptor in the catalytic mechanism.

The protein belongs to the enoyl-CoA hydratase/isomerase family.

It carries out the reaction (R)-carnitinyl-CoA = crotonobetainyl-CoA + H2O. Its pathway is amine and polyamine metabolism; carnitine metabolism. Its function is as follows. Catalyzes the reversible dehydration of L-carnitinyl-CoA to crotonobetainyl-CoA. This chain is Carnitinyl-CoA dehydratase, found in Escherichia coli O6:K15:H31 (strain 536 / UPEC).